The chain runs to 156 residues: ATP synthase subunit b (156 aa).

Residues 7–29 (LIGQLIAFALFTWFCVKFVWPPI) form a helical membrane-spanning segment.

Belongs to the ATPase B chain family. F-type ATPases have 2 components, F(1) - the catalytic core - and F(0) - the membrane proton channel. F(1) has five subunits: alpha(3), beta(3), gamma(1), delta(1), epsilon(1). F(0) has three main subunits: a(1), b(2) and c(10-14). The alpha and beta chains form an alternating ring which encloses part of the gamma chain. F(1) is attached to F(0) by a central stalk formed by the gamma and epsilon chains, while a peripheral stalk is formed by the delta and b chains.

The protein resides in the cell inner membrane. In terms of biological role, f(1)F(0) ATP synthase produces ATP from ADP in the presence of a proton or sodium gradient. F-type ATPases consist of two structural domains, F(1) containing the extramembraneous catalytic core and F(0) containing the membrane proton channel, linked together by a central stalk and a peripheral stalk. During catalysis, ATP synthesis in the catalytic domain of F(1) is coupled via a rotary mechanism of the central stalk subunits to proton translocation. Its function is as follows. Component of the F(0) channel, it forms part of the peripheral stalk, linking F(1) to F(0). The polypeptide is ATP synthase subunit b (Mannheimia succiniciproducens (strain KCTC 0769BP / MBEL55E)).